The primary structure comprises 373 residues: Lipoyl amidotransferase LIPT1, mitochondrial (373 aa).

The transit peptide at methionine 1–lysine 25 directs the protein to the mitochondrion. The region spanning leucine 57–asparagine 243 is the BPL/LPL catalytic domain. Tyrosine 107, arginine 151, lysine 161, and threonine 179 together coordinate (R)-lipoyl-5'-AMP.

Belongs to the LplA family. As to expression, highly expressed in skeletal muscle and heart, moderately in kidney and pancreas, and detected at lower levels in liver, brain, placenta and lung.

It localises to the mitochondrion. It carries out the reaction N(6)-[(R)-lipoyl]-L-lysyl-[glycine-cleavage complex H protein] + L-lysyl-[lipoyl-carrier protein] = L-lysyl-[glycine-cleavage complex H protein] + N(6)-[(R)-lipoyl]-L-lysyl-[lipoyl-carrier protein]. The catalysed reaction is (R)-lipoyl-5'-AMP + L-lysyl-[lipoyl-carrier protein] = N(6)-[(R)-lipoyl]-L-lysyl-[lipoyl-carrier protein] + AMP + 2 H(+). It participates in protein modification; protein lipoylation via exogenous pathway; protein N(6)-(lipoyl)lysine from lipoate: step 2/2. Its function is as follows. Lipoyl amidotransferase that catalyzes the transfer of lipoyl moieties from lipoyl-protein H of the glycine cleavage system (lipoyl-GCSH) to E2 subunits of the pyruvate dehydrogenase complex (PDCE2). Unable to catalyze the transfer of octanoyl from octanoyl-GCSH to PDCE2. In vitro, it is also able to catalyze the transfer of the lipoyl group from lipoyl-AMP to the specific lysine residue of lipoyl domains of lipoate-dependent enzymes but this reaction may not be physiologically relevant. The polypeptide is Lipoyl amidotransferase LIPT1, mitochondrial (Homo sapiens (Human)).